A 157-amino-acid chain; its full sequence is Spore germination protein GerT (157 aa).

Its subcellular location is the spore coat. Functionally, involved in spore germination; probably required at the earliest stage of germination. In Bacillus subtilis (strain 168), this protein is Spore germination protein GerT (gerT).